A 124-amino-acid polypeptide reads, in one-letter code: Small ribosomal subunit protein uS12 (124 aa).

At Asp89 the chain carries 3-methylthioaspartic acid. The segment at 105–124 (QGVKNRKQARSRYGAKKEKS) is disordered. Over residues 108 to 118 (KNRKQARSRYG) the composition is skewed to basic residues.

The protein belongs to the universal ribosomal protein uS12 family. In terms of assembly, part of the 30S ribosomal subunit. Contacts proteins S8 and S17. May interact with IF1 in the 30S initiation complex.

With S4 and S5 plays an important role in translational accuracy. Functionally, interacts with and stabilizes bases of the 16S rRNA that are involved in tRNA selection in the A site and with the mRNA backbone. Located at the interface of the 30S and 50S subunits, it traverses the body of the 30S subunit contacting proteins on the other side and probably holding the rRNA structure together. The combined cluster of proteins S8, S12 and S17 appears to hold together the shoulder and platform of the 30S subunit. This is Small ribosomal subunit protein uS12 (rpsL) from Mycolicibacterium smegmatis (strain ATCC 700084 / mc(2)155) (Mycobacterium smegmatis).